A 218-amino-acid polypeptide reads, in one-letter code: Large ribosomal subunit protein uL3 (218 aa).

The segment at 127–167 (GFSRGPMSHGSKNHREPGSTGAGTTPGRIYPGKRMAGRYGG) is disordered.

Belongs to the universal ribosomal protein uL3 family. As to quaternary structure, part of the 50S ribosomal subunit. Forms a cluster with proteins L14 and L19.

In terms of biological role, one of the primary rRNA binding proteins, it binds directly near the 3'-end of the 23S rRNA, where it nucleates assembly of the 50S subunit. This Prochlorococcus marinus (strain MIT 9303) protein is Large ribosomal subunit protein uL3.